The sequence spans 209 residues: Chaperone protein TorD (209 aa).

The protein belongs to the TorD/DmsD family. TorD subfamily.

The protein localises to the cytoplasm. Functionally, involved in the biogenesis of TorA. Acts on TorA before the insertion of the molybdenum cofactor and, as a result, probably favors a conformation of the apoenzyme that is competent for acquiring the cofactor. The sequence is that of Chaperone protein TorD from Shewanella sp. (strain ANA-3).